The sequence spans 300 residues: 7-methylguanosine phosphate-specific 5'-nucleotidase (300 aa).

The Nucleophile role is filled by D41. 2 residues coordinate Mg(2+): D41 and D43. The active-site Proton donor is the D43. Position 88 (E88) interacts with CMP. E88 contacts N(7)-methyl-GMP. Residues 156–157 (SA) and K205 contribute to the substrate site. Residue D230 coordinates Mg(2+). Position 256 is an N6-acetyllysine (K256).

It belongs to the pyrimidine 5'-nucleotidase family. In terms of assembly, monomer.

The protein localises to the cytoplasm. It carries out the reaction N(7)-methyl-GMP + H2O = N(7)-methylguanosine + phosphate. The catalysed reaction is CMP + H2O = cytidine + phosphate. The enzyme catalyses a ribonucleoside 5'-phosphate + H2O = a ribonucleoside + phosphate. Specifically hydrolyzes 7-methylguanosine monophosphate (m(7)GMP) to 7-methylguanosine and inorganic phosphate. The specific activity for m(7)GMP may protect cells against undesired salvage of m(7)GMP and its incorporation into nucleic acids. Also has weak activity for CMP. UMP and purine nucleotides are poor substrates. This is 7-methylguanosine phosphate-specific 5'-nucleotidase (NT5C3B) from Homo sapiens (Human).